The following is a 348-amino-acid chain: tRNA N6-adenosine threonylcarbamoyltransferase (348 aa).

The Fe cation site is built by histidine 114 and histidine 118. Residues 137 to 141 (LVSGG), aspartate 171, glycine 184, aspartate 188, and asparagine 283 each bind substrate. Aspartate 311 contributes to the Fe cation binding site.

The protein belongs to the KAE1 / TsaD family. The cofactor is Fe(2+).

Its subcellular location is the cytoplasm. The catalysed reaction is L-threonylcarbamoyladenylate + adenosine(37) in tRNA = N(6)-L-threonylcarbamoyladenosine(37) in tRNA + AMP + H(+). Its function is as follows. Required for the formation of a threonylcarbamoyl group on adenosine at position 37 (t(6)A37) in tRNAs that read codons beginning with adenine. Is involved in the transfer of the threonylcarbamoyl moiety of threonylcarbamoyl-AMP (TC-AMP) to the N6 group of A37, together with TsaE and TsaB. TsaD likely plays a direct catalytic role in this reaction. The polypeptide is tRNA N6-adenosine threonylcarbamoyltransferase (Nocardioides sp. (strain ATCC BAA-499 / JS614)).